We begin with the raw amino-acid sequence, 390 residues long: Phosphoglycerate kinase (390 aa).

Residues 19–21 (DYN), R34, 57–60 (HLGR), R115, and R148 each bind substrate. ATP contacts are provided by residues K198, G289, E320, and 347–350 (GGDS).

It belongs to the phosphoglycerate kinase family. As to quaternary structure, monomer.

The protein localises to the cytoplasm. It catalyses the reaction (2R)-3-phosphoglycerate + ATP = (2R)-3-phospho-glyceroyl phosphate + ADP. It participates in carbohydrate degradation; glycolysis; pyruvate from D-glyceraldehyde 3-phosphate: step 2/5. This Thermus thermophilus (strain ATCC BAA-163 / DSM 7039 / HB27) protein is Phosphoglycerate kinase.